Here is a 1368-residue protein sequence, read N- to C-terminus: DNA-directed RNA polymerase subunit beta (1368 aa).

Belongs to the RNA polymerase beta chain family. In terms of assembly, the RNAP catalytic core consists of 2 alpha, 1 beta, 1 beta' and 1 omega subunit. When a sigma factor is associated with the core the holoenzyme is formed, which can initiate transcription.

The catalysed reaction is RNA(n) + a ribonucleoside 5'-triphosphate = RNA(n+1) + diphosphate. DNA-dependent RNA polymerase catalyzes the transcription of DNA into RNA using the four ribonucleoside triphosphates as substrates. This Burkholderia lata (strain ATCC 17760 / DSM 23089 / LMG 22485 / NCIMB 9086 / R18194 / 383) protein is DNA-directed RNA polymerase subunit beta.